The primary structure comprises 111 residues: Probable 4-amino-4-deoxy-L-arabinose-phosphoundecaprenol flippase subunit ArnE (111 aa).

Transmembrane regions (helical) follow at residues 38-58, 61-81, and 91-111; these read LWLGLALICMGAAMVLWLLVL, LPVGIAYPMLSLNFVWVTLAA, and PRHWLGVALIISGIIILGSAA. The EamA domain maps to 40 to 109; that stretch reads LGLALICMGA…IISGIIILGS (70 aa).

Belongs to the ArnE family. Heterodimer of ArnE and ArnF.

It localises to the cell inner membrane. It functions in the pathway bacterial outer membrane biogenesis; lipopolysaccharide biosynthesis. Functionally, translocates 4-amino-4-deoxy-L-arabinose-phosphoundecaprenol (alpha-L-Ara4N-phosphoundecaprenol) from the cytoplasmic to the periplasmic side of the inner membrane. The protein is Probable 4-amino-4-deoxy-L-arabinose-phosphoundecaprenol flippase subunit ArnE of Salmonella newport (strain SL254).